A 760-amino-acid chain; its full sequence is Transglutaminase-activating metalloprotease (760 aa).

Positions 1-33 are cleaved as a signal peptide; that stretch reads MRPTPQRRAVATGALVAVTAMLAVGVQTTSANA. Disordered regions lie at residues 32-59 and 228-265; these read NAGQ…PVKL and KQGT…KTYN. Positions 34–229 are excised as a propeptide; sequence GQDKAAHPAP…KLFEFQGVKQ (196 aa). Residues 228–257 are compositionally biased toward polar residues; the sequence is KQGTGNSQHSGQVQIGTTKSGSSYQMNDTT. Histidine 366 is a Zn(2+) binding site. Glutamate 367 is a catalytic residue. Zn(2+) is bound by residues histidine 370 and glutamate 390. Histidine 454 (proton donor) is an active-site residue. Positions 640 to 760 constitute a P/Homo B domain; that stretch reads TVNTTGGGSV…GTIDKWRLTF (121 aa).

This sequence belongs to the peptidase M4 family. It depends on Zn(2+) as a cofactor.

It localises to the secreted. Cleaves the N-terminal propeptide of transglutaminase thus activating it. The chain is Transglutaminase-activating metalloprotease from Streptomyces mobaraensis (Streptoverticillium mobaraense).